We begin with the raw amino-acid sequence, 535 residues long: Dimethylaniline monooxygenase [N-oxide-forming] 2 (535 aa).

N-acetylalanine is present on alanine 2. FAD contacts are provided by residues 9–13 (GAGVS), glutamate 32, 40–41 (VW), and 61–62 (NT). Residues 60 to 61 (TN) and 195 to 198 (SGSD) contribute to the NADP(+) site. Lysine 492 participates in a covalent cross-link: Glycyl lysine isopeptide (Lys-Gly) (interchain with G-Cter in SUMO). Residues 510–530 (FSVSFLLKILGLLAVVVAFFC) form a helical membrane-spanning segment.

Belongs to the FMO family. Requires FAD as cofactor. The cofactor is Mg(2+).

It is found in the microsome membrane. It localises to the endoplasmic reticulum membrane. Its function is as follows. Catalyzes the oxidative metabolism of numerous xenobiotics, including mainly therapeutic drugs and insecticides that contain a soft nucleophile, most commonly nitrogen and sulfur and participates to their bioactivation. This chain is Dimethylaniline monooxygenase [N-oxide-forming] 2, found in Pan troglodytes (Chimpanzee).